The chain runs to 139 residues: GSK3B-interacting protein (139 aa).

The segment at 41-45 is required for PRKAR2A interaction; contributes to a protective effect against H(2)O(2)-induced apoptosis; the sequence is VNDVL. The interaction with GSK3B and acts as a GSK3B inhibitor stretch occupies residues 115 to 139; sequence SPAYREAFGNALLQRLEALKREGQS.

It belongs to the GSKIP family. As to quaternary structure, forms a complex composed of PRKAR2A or PRKAR2B, GSK3B and GSKIP through GSKIP interaction; facilitates PKA-induced phosphorylation of GSK3B leading to GSK3B inactivation; recruits DNM1L through GSK3B for PKA-mediated phosphorylation of DNM1L; promotes beta-catenin degradation through GSK3B-induced phosphorylation of beta-catenin; stabilizes beta-catenin and enhances Wnt-induced signaling through PKA-induced phosphorylation of beta-catenin. Interacts with GSK3B; induces GSK3B-mediated phosphorylation of GSKIP and inhibits GSK3B kinase activity. In terms of processing, phosphorylated by GSK3B.

The protein localises to the cytoplasm. Its subcellular location is the nucleus. Functionally, A-kinase anchoring protein for GSK3B and PKA that regulates or facilitates their kinase activity towards their targets. The ternary complex enhances Wnt-induced signaling by facilitating the GSK3B- and PKA-induced phosphorylation of beta-catenin leading to beta-catenin degradation and stabilization respectively. Upon cAMP activation, the ternary complex contributes to neuroprotection against oxidative stress-induced apoptosis by facilitating the PKA-induced phosphorylation of DML1 and PKA-induced inactivation of GSK3B. During neurite outgrowth promotes neuron proliferation; while increases beta-catenin-induced transcriptional activity through GSK3B kinase activity inhibition, reduces N-cadherin level to promote cell cycle progression. May play a role in cleft palate formation and is required for postnatal life through modulation of the activity of GSK3B during development. This Bos taurus (Bovine) protein is GSK3B-interacting protein.